The chain runs to 147 residues: Large ribosomal subunit protein uL13 (147 aa).

The interval 126 to 147 is disordered; the sequence is GGPEHPHAAQNPQPYEITQIAQ.

Belongs to the universal ribosomal protein uL13 family. As to quaternary structure, part of the 50S ribosomal subunit.

Its function is as follows. This protein is one of the early assembly proteins of the 50S ribosomal subunit, although it is not seen to bind rRNA by itself. It is important during the early stages of 50S assembly. This is Large ribosomal subunit protein uL13 from Cutibacterium acnes (strain DSM 16379 / KPA171202) (Propionibacterium acnes).